We begin with the raw amino-acid sequence, 497 residues long: Glycerol kinase (497 aa).

Thr13 is a binding site for ADP. ATP contacts are provided by Thr13, Thr14, and Ser15. Thr13 lines the sn-glycerol 3-phosphate pocket. Arg17 lines the ADP pocket. Arg83, Glu84, and Tyr135 together coordinate sn-glycerol 3-phosphate. Arg83, Glu84, and Tyr135 together coordinate glycerol. His231 is subject to Phosphohistidine; by HPr. Sn-glycerol 3-phosphate is bound at residue Asp245. Residues Asp245 and Gln246 each contribute to the glycerol site. ADP contacts are provided by Thr267 and Gly310. Positions 267, 310, 314, and 411 each coordinate ATP. The ADP site is built by Gly411 and Asn415.

This sequence belongs to the FGGY kinase family. As to quaternary structure, homotetramer and homodimer (in equilibrium). Post-translationally, the phosphoenolpyruvate-dependent sugar phosphotransferase system (PTS), including enzyme I, and histidine-containing protein (HPr) are required for the phosphorylation, which leads to the activation of the enzyme.

The enzyme catalyses glycerol + ATP = sn-glycerol 3-phosphate + ADP + H(+). It participates in polyol metabolism; glycerol degradation via glycerol kinase pathway; sn-glycerol 3-phosphate from glycerol: step 1/1. Its activity is regulated as follows. Activated by phosphorylation and inhibited by fructose 1,6-bisphosphate (FBP). Key enzyme in the regulation of glycerol uptake and metabolism. Catalyzes the phosphorylation of glycerol to yield sn-glycerol 3-phosphate. This is Glycerol kinase from Halalkalibacterium halodurans (strain ATCC BAA-125 / DSM 18197 / FERM 7344 / JCM 9153 / C-125) (Bacillus halodurans).